The following is a 265-amino-acid chain: tRNA pseudouridine synthase A (265 aa).

Asp-53 functions as the Nucleophile in the catalytic mechanism. Tyr-111 is a binding site for substrate.

This sequence belongs to the tRNA pseudouridine synthase TruA family. Homodimer.

It catalyses the reaction uridine(38/39/40) in tRNA = pseudouridine(38/39/40) in tRNA. Functionally, formation of pseudouridine at positions 38, 39 and 40 in the anticodon stem and loop of transfer RNAs. The polypeptide is tRNA pseudouridine synthase A (Acinetobacter baumannii (strain AB307-0294)).